Consider the following 510-residue polypeptide: NAD(P)H-quinone oxidoreductase subunit 2, chloroplastic (510 aa).

12 consecutive transmembrane segments (helical) span residues 24 to 44, 59 to 79, 99 to 119, 124 to 144, 149 to 169, 184 to 204, 229 to 249, 295 to 315, 323 to 343, 354 to 374, 395 to 415, and 418 to 438; these read LLLF…GLIL, WFYF…FFRW, IFQF…VEYI, MAIT…MFLC, LITI…LSGY, LLMG…LYGL, ISIA…PAPF, WHLL…LIAL, MLAY…IVGD, YMLF…SFGL, ALSS…AGFF, and LYLF…IGLL.

It belongs to the complex I subunit 2 family. NDH is composed of at least 16 different subunits, 5 of which are encoded in the nucleus.

It is found in the plastid. The protein localises to the chloroplast thylakoid membrane. It catalyses the reaction a plastoquinone + NADH + (n+1) H(+)(in) = a plastoquinol + NAD(+) + n H(+)(out). It carries out the reaction a plastoquinone + NADPH + (n+1) H(+)(in) = a plastoquinol + NADP(+) + n H(+)(out). Its function is as follows. NDH shuttles electrons from NAD(P)H:plastoquinone, via FMN and iron-sulfur (Fe-S) centers, to quinones in the photosynthetic chain and possibly in a chloroplast respiratory chain. The immediate electron acceptor for the enzyme in this species is believed to be plastoquinone. Couples the redox reaction to proton translocation, and thus conserves the redox energy in a proton gradient. The sequence is that of NAD(P)H-quinone oxidoreductase subunit 2, chloroplastic from Coelogyne cristata (Orchid).